The primary structure comprises 502 residues: MSQEKYIMAIDQGTTSSRAIIFNKKGEKVSSSQKEFTQIFPQAGWVEHNANEIWNSVQSVIAGAFIESGVKPNQIEAIGITNQRETTVVWDKKTGLPIYNAIVWQSRQTAPLAEQLKSQGYVEKFHEKTGLIIDAYFSATKVRWILDHVEGAQERAEKGELLFGTIDTWLVWKLTDGAAHVTDYSNAARTMLYNIKELKWDDEILEILNIPKAILPEVRSNSEIYGKTAPFHFYGGEVPISGMAGDQQAALFGQLAFEPGMVKNTYGTGSFIIMNTGEEMQLSENNLLTTIGYGINGKVYYALEGSIFIAGSAIQWLRDGLRMVENSPESEKYARDSHNNDEVYVVPAFTGLGAPYWNQNARGSVFGLTRGTSKEDFIKATLQSIAYQVRDIIDTMQMDTQTAIQVLKVDGGAAMNNFLMQFQADILGIDIARAKNLETTALGAAFLAGLSVGYWKDLDELKLLNETGELFEPSMNESRKEQLYKGWKKAVKATQVFAEIDD.

ADP is bound at residue T14. ATP-binding residues include T14, T15, and S16. T14 contributes to the sn-glycerol 3-phosphate binding site. Residue R18 participates in ADP binding. Residues R84, E85, and Y136 each contribute to the sn-glycerol 3-phosphate site. Glycerol is bound by residues R84, E85, and Y136. H232 carries the post-translational modification Phosphohistidine; by HPr. D246 is a binding site for sn-glycerol 3-phosphate. The glycerol site is built by D246 and Q247. Residues T268 and G311 each coordinate ADP. Positions 268, 311, 315, and 412 each coordinate ATP. The ADP site is built by G412 and N416.

Belongs to the FGGY kinase family. Homotetramer and homodimer (in equilibrium). Post-translationally, the phosphoenolpyruvate-dependent sugar phosphotransferase system (PTS), including enzyme I, and histidine-containing protein (HPr) are required for the phosphorylation, which leads to the activation of the enzyme.

The enzyme catalyses glycerol + ATP = sn-glycerol 3-phosphate + ADP + H(+). Its pathway is polyol metabolism; glycerol degradation via glycerol kinase pathway; sn-glycerol 3-phosphate from glycerol: step 1/1. With respect to regulation, activated by phosphorylation and inhibited by fructose 1,6-bisphosphate (FBP). Its function is as follows. Key enzyme in the regulation of glycerol uptake and metabolism. Catalyzes the phosphorylation of glycerol to yield sn-glycerol 3-phosphate. The chain is Glycerol kinase from Streptococcus pneumoniae (strain P1031).